The chain runs to 62 residues: Conotoxin Pl168 (62 aa).

Residues 1-21 form the signal peptide; the sequence is MGMRMMFTVFLLVVLATTVVS. The propeptide occupies 22–40; that stretch reads FTLDRASDGANAAADLVAR. 2 disulfides stabilise this stretch: Cys46–Cys52 and Cys47–Cys61.

Belongs to the conotoxin A superfamily. Post-translationally, both Pro-53 and Pro-62 are not in cis/trans isomerization. Expressed by the venom duct.

The protein localises to the secreted. Its function is as follows. Probable neurotoxin with unknown target. Possibly targets ion channels. The polypeptide is Conotoxin Pl168 (Conus planorbis (Planorbis cone)).